Here is a 702-residue protein sequence, read N- to C-terminus: Phosphoribosylformylglycinamidine synthase subunit PurL (702 aa).

The active site involves H36. Y39 and K80 together coordinate ATP. Position 82 (E82) interacts with Mg(2+). Substrate contacts are provided by residues 83-86 (SHNH) and R105. Residue H84 is the Proton acceptor of the active site. D106 contacts Mg(2+). Q225 contributes to the substrate binding site. D251 serves as a coordination point for Mg(2+). 293 to 295 (ETQ) lines the substrate pocket. D468 and G505 together coordinate ATP. S508 contributes to the substrate binding site.

It belongs to the FGAMS family. As to quaternary structure, monomer. Part of the FGAM synthase complex composed of 1 PurL, 1 PurQ and 2 PurS subunits.

It localises to the cytoplasm. It carries out the reaction N(2)-formyl-N(1)-(5-phospho-beta-D-ribosyl)glycinamide + L-glutamine + ATP + H2O = 2-formamido-N(1)-(5-O-phospho-beta-D-ribosyl)acetamidine + L-glutamate + ADP + phosphate + H(+). The protein operates within purine metabolism; IMP biosynthesis via de novo pathway; 5-amino-1-(5-phospho-D-ribosyl)imidazole from N(2)-formyl-N(1)-(5-phospho-D-ribosyl)glycinamide: step 1/2. In terms of biological role, part of the phosphoribosylformylglycinamidine synthase complex involved in the purines biosynthetic pathway. Catalyzes the ATP-dependent conversion of formylglycinamide ribonucleotide (FGAR) and glutamine to yield formylglycinamidine ribonucleotide (FGAM) and glutamate. The FGAM synthase complex is composed of three subunits. PurQ produces an ammonia molecule by converting glutamine to glutamate. PurL transfers the ammonia molecule to FGAR to form FGAM in an ATP-dependent manner. PurS interacts with PurQ and PurL and is thought to assist in the transfer of the ammonia molecule from PurQ to PurL. The polypeptide is Phosphoribosylformylglycinamidine synthase subunit PurL (Metallosphaera sedula (strain ATCC 51363 / DSM 5348 / JCM 9185 / NBRC 15509 / TH2)).